A 671-amino-acid polypeptide reads, in one-letter code: DNA ligase (671 aa).

NAD(+) is bound by residues 34-38 (DSEYD), 83-84 (SL), and glutamate 113. The active-site N6-AMP-lysine intermediate is the lysine 115. Residues arginine 136, glutamate 170, lysine 286, and lysine 310 each coordinate NAD(+). 4 residues coordinate Zn(2+): cysteine 404, cysteine 407, cysteine 422, and cysteine 427. Positions 590-671 (EEAGVFAGKT…FTQAVEQSEQ (82 aa)) constitute a BRCT domain.

The protein belongs to the NAD-dependent DNA ligase family. LigA subfamily. The cofactor is Mg(2+). Mn(2+) serves as cofactor.

The enzyme catalyses NAD(+) + (deoxyribonucleotide)n-3'-hydroxyl + 5'-phospho-(deoxyribonucleotide)m = (deoxyribonucleotide)n+m + AMP + beta-nicotinamide D-nucleotide.. Its function is as follows. DNA ligase that catalyzes the formation of phosphodiester linkages between 5'-phosphoryl and 3'-hydroxyl groups in double-stranded DNA using NAD as a coenzyme and as the energy source for the reaction. It is essential for DNA replication and repair of damaged DNA. The sequence is that of DNA ligase from Shouchella clausii (strain KSM-K16) (Alkalihalobacillus clausii).